The sequence spans 102 residues: uncharacterized protein (102 aa).

The [3Fe-4S] cluster site is built by Cys-10, Cys-16, and Cys-55. Positions 66–102 (DAGDDERASADPARSPAEAERHAAKDQRIPGGHDGTV) are disordered. Residues 82–93 (AEAERHAAKDQR) show a composition bias toward basic and acidic residues.

[3Fe-4S] cluster is required as a cofactor.

In terms of biological role, electron transport protein for the cytochrome systems. This is an uncharacterized protein from Sinorhizobium fredii (strain NBRC 101917 / NGR234).